Here is a 242-residue protein sequence, read N- to C-terminus: 1-(5-phosphoribosyl)-5-[(5-phosphoribosylamino)methylideneamino] imidazole-4-carboxamide isomerase (242 aa).

D8 acts as the Proton acceptor in catalysis. D129 (proton donor) is an active-site residue.

This sequence belongs to the HisA/HisF family.

The protein localises to the cytoplasm. It catalyses the reaction 1-(5-phospho-beta-D-ribosyl)-5-[(5-phospho-beta-D-ribosylamino)methylideneamino]imidazole-4-carboxamide = 5-[(5-phospho-1-deoxy-D-ribulos-1-ylimino)methylamino]-1-(5-phospho-beta-D-ribosyl)imidazole-4-carboxamide. It functions in the pathway amino-acid biosynthesis; L-histidine biosynthesis; L-histidine from 5-phospho-alpha-D-ribose 1-diphosphate: step 4/9. This is 1-(5-phosphoribosyl)-5-[(5-phosphoribosylamino)methylideneamino] imidazole-4-carboxamide isomerase from Dictyoglomus turgidum (strain DSM 6724 / Z-1310).